We begin with the raw amino-acid sequence, 404 residues long: Imidazolonepropionase (404 aa).

Fe(3+)-binding residues include His73 and His75. Positions 73 and 75 each coordinate Zn(2+). Arg82, Tyr145, and His178 together coordinate 4-imidazolone-5-propanoate. Tyr145 lines the N-formimidoyl-L-glutamate pocket. His243 lines the Fe(3+) pocket. His243 contributes to the Zn(2+) binding site. Gln246 is a binding site for 4-imidazolone-5-propanoate. Asp318 is a binding site for Fe(3+). Residue Asp318 coordinates Zn(2+). N-formimidoyl-L-glutamate-binding residues include Asn320 and Gly322. Ser323 contributes to the 4-imidazolone-5-propanoate binding site.

Belongs to the metallo-dependent hydrolases superfamily. HutI family. Requires Zn(2+) as cofactor. It depends on Fe(3+) as a cofactor.

Its subcellular location is the cytoplasm. It catalyses the reaction 4-imidazolone-5-propanoate + H2O = N-formimidoyl-L-glutamate. It functions in the pathway amino-acid degradation; L-histidine degradation into L-glutamate; N-formimidoyl-L-glutamate from L-histidine: step 3/3. Functionally, catalyzes the hydrolytic cleavage of the carbon-nitrogen bond in imidazolone-5-propanoate to yield N-formimidoyl-L-glutamate. It is the third step in the universal histidine degradation pathway. This is Imidazolonepropionase from Bradyrhizobium sp. (strain BTAi1 / ATCC BAA-1182).